We begin with the raw amino-acid sequence, 377 residues long: Chaperone protein DnaJ (377 aa).

Positions 5 to 70 (DFYEVLGVER…SKRAAYDQYG (66 aa)) constitute a J domain. A CR-type zinc finger spans residues 136 to 214 (GTTVTIRVPT…CHGQGRVEEQ (79 aa)). Zn(2+) contacts are provided by Cys-149, Cys-152, Cys-166, Cys-169, Cys-188, Cys-191, Cys-202, and Cys-205. CXXCXGXG motif repeat units follow at residues 149–156 (CKTCNGSG), 166–173 (CTTCGGIG), 188–195 (CPRCHGTG), and 202–209 (CGSCHGQG).

This sequence belongs to the DnaJ family. Homodimer. Zn(2+) serves as cofactor.

The protein resides in the cytoplasm. Functionally, participates actively in the response to hyperosmotic and heat shock by preventing the aggregation of stress-denatured proteins and by disaggregating proteins, also in an autonomous, DnaK-independent fashion. Unfolded proteins bind initially to DnaJ; upon interaction with the DnaJ-bound protein, DnaK hydrolyzes its bound ATP, resulting in the formation of a stable complex. GrpE releases ADP from DnaK; ATP binding to DnaK triggers the release of the substrate protein, thus completing the reaction cycle. Several rounds of ATP-dependent interactions between DnaJ, DnaK and GrpE are required for fully efficient folding. Also involved, together with DnaK and GrpE, in the DNA replication of plasmids through activation of initiation proteins. The sequence is that of Chaperone protein DnaJ from Pseudomonas aeruginosa (strain LESB58).